The following is a 98-amino-acid chain: NADH-ubiquinone oxidoreductase chain 4L (98 aa).

A run of 3 helical transmembrane segments spans residues 1 to 21 (MPII…GMLF), 29 to 49 (SLLC…LMAL), and 58 to 78 (IVPI…LALL).

This sequence belongs to the complex I subunit 4L family. In terms of assembly, core subunit of respiratory chain NADH dehydrogenase (Complex I) which is composed of 45 different subunits.

It is found in the mitochondrion inner membrane. It catalyses the reaction a ubiquinone + NADH + 5 H(+)(in) = a ubiquinol + NAD(+) + 4 H(+)(out). Functionally, core subunit of the mitochondrial membrane respiratory chain NADH dehydrogenase (Complex I) which catalyzes electron transfer from NADH through the respiratory chain, using ubiquinone as an electron acceptor. Part of the enzyme membrane arm which is embedded in the lipid bilayer and involved in proton translocation. This chain is NADH-ubiquinone oxidoreductase chain 4L (MT-ND4L), found in Trachypithecus obscurus (Dusky leaf-monkey).